Reading from the N-terminus, the 193-residue chain is GTP cyclohydrolase 1 (193 aa).

Zn(2+) is bound by residues cysteine 83, histidine 86, and cysteine 154.

This sequence belongs to the GTP cyclohydrolase I family. In terms of assembly, homomer.

It carries out the reaction GTP + H2O = 7,8-dihydroneopterin 3'-triphosphate + formate + H(+). It participates in cofactor biosynthesis; 7,8-dihydroneopterin triphosphate biosynthesis; 7,8-dihydroneopterin triphosphate from GTP: step 1/1. The chain is GTP cyclohydrolase 1 from Porphyromonas gingivalis (strain ATCC 33277 / DSM 20709 / CIP 103683 / JCM 12257 / NCTC 11834 / 2561).